We begin with the raw amino-acid sequence, 340 residues long: 4-hydroxy-2-oxovalerate aldolase (340 aa).

Residues 8 to 260 (VILHDMSLRD…HHGVNLYDIM (253 aa)) form the Pyruvate carboxyltransferase domain. 16-17 (RD) serves as a coordination point for substrate. D17 is a Mn(2+) binding site. Residue H20 is the Proton acceptor of the active site. Residues S170 and H199 each coordinate substrate. The Mn(2+) site is built by H199 and H201. Y290 serves as a coordination point for substrate.

It belongs to the 4-hydroxy-2-oxovalerate aldolase family.

The enzyme catalyses (S)-4-hydroxy-2-oxopentanoate = acetaldehyde + pyruvate. This Shewanella halifaxensis (strain HAW-EB4) protein is 4-hydroxy-2-oxovalerate aldolase.